The chain runs to 107 residues: U1-lycotoxin-Ls1d (107 aa).

An N-terminal signal peptide occupies residues Met-1–Ser-20. A propeptide spanning residues Glu-21–Arg-41 is cleaved from the precursor. Disulfide bonds link Cys-44/Cys-59, Cys-51/Cys-68, Cys-58/Cys-86, and Cys-70/Cys-84.

The protein belongs to the neurotoxin 19 (CSTX) family. 04 (U1-Lctx) subfamily. Expressed by the venom gland.

It localises to the secreted. In Lycosa singoriensis (Wolf spider), this protein is U1-lycotoxin-Ls1d.